The chain runs to 244 residues: Haloacid dehalogenase-like hydrolase domain-containing protein Sgpp (244 aa).

The active-site Nucleophile is Asp-28. Positions 28, 30, and 189 each coordinate Mg(2+). The active-site Proton donor is the Asp-30.

This sequence belongs to the HAD-like hydrolase superfamily. DOG/GPP family. Mg(2+) serves as cofactor. As to expression, ubiquitous with highest expression in flowers.

Its function is as follows. Acts as a phosphosugar phosphatase on a broad range of sugar phosphate substrates with preferential activity on D-ribose-5-phosphate, 2-deoxy-D-ribose-5-phosphate, 2-deoxy-D-glucose-6-phosphate, and D-mannose-6-phosphate and with a lower activity on D-fructose-1-phosphate, D-glucose-6-phosphate, DL-glycerol-3-phosphate, and D-fructose-6-phosphate. In Arabidopsis thaliana (Mouse-ear cress), this protein is Haloacid dehalogenase-like hydrolase domain-containing protein Sgpp (SGPP).